The sequence spans 457 residues: Phosphoglucosamine mutase (457 aa).

The active-site Phosphoserine intermediate is serine 103. The Mg(2+) site is built by serine 103, aspartate 245, aspartate 247, and aspartate 249. Serine 103 bears the Phosphoserine mark.

This sequence belongs to the phosphohexose mutase family. The cofactor is Mg(2+). In terms of processing, activated by phosphorylation.

It catalyses the reaction alpha-D-glucosamine 1-phosphate = D-glucosamine 6-phosphate. Its function is as follows. Catalyzes the conversion of glucosamine-6-phosphate to glucosamine-1-phosphate. In Syntrophotalea carbinolica (strain DSM 2380 / NBRC 103641 / GraBd1) (Pelobacter carbinolicus), this protein is Phosphoglucosamine mutase.